A 2150-amino-acid chain; its full sequence is Zinc finger protein sdc-3 (2150 aa).

Positions 443–987 (QEITSPMFAL…DQVENEEPER (545 aa)) are dosage compensation domain 1. Disordered stretches follow at residues 874–894 (EKEWHEMRAAQRAQKEKEEED), 1261–1373 (GSVV…GPEV), 1411–1448 (FETSPVPAPEGNIPSRAHSSDDDVQVISSETDPNGPIN), and 1491–1670 (EVLQ…SEKL). Residues 1267–1293 (TNQQEENVTSEGPTLQEGSSIPSSSHI) show a composition bias toward polar residues. Residues 1321–1333 (KKSGKTTRGRPKK) are compositionally biased toward basic residues. Residues 1347–1357 (GQKEEAAHEPE) are compositionally biased toward basic and acidic residues. Positions 1504 to 1524 (SSKKRGRRRKKTPPHIAKARK) are enriched in basic residues. The segment at 1508-1516 (RGRRRKKTP) is sex determination domain. Residues 1585-1598 (EDLHETERPGHVGE) show a composition bias toward basic and acidic residues. Over residues 1638–1648 (IQSQAGTNASP) the composition is skewed to polar residues. 2 C2H2-type zinc fingers span residues 2078-2105 (HKCVQCSIRNQSVYFSSYSLLELHGKLH) and 2117-2141 (DDCQDCYETLTSSFEVIVHRINHHH). The segment at 2080 to 2105 (CVQCSIRNQSVYFSSYSLLELHGKLH) is dosage compensation domain 2.

Component of the SDC complex, which consists of sdc-1, sdc-2 and sdc-3. Within the complex, interacts with sdc-1 and sdc-2. Interacts with dpy-21. Post-translationally, sumoylated. Sumoylation is important for assembly of the dosage compensation complex and its robust binding to the X chromosome. Expressed in somatic and in germline tissues in hermaphrodites (XX). In males (XO), only present in embryos younger than the 100-cell stage (at protein level).

It localises to the chromosome. The protein localises to the nucleus. Functionally, component of the SDC complex that functions in sex determination and in X chromosome dosage compensation specifically in hermaphrodite (XX) animals. Plays a central role in the recruitment of the condensin I-like dosage compensation complex to the male sex-determining autosomal gene her-1, thereby contributing to its repression and initiating hermaphrodite sexual development. Involved in the recruitment and assembly of the dosage compensation complex and the dosage compensation protein dpy-21 onto the X chromosomes in hermaphrodites, which leads to a reduction of X-linked gene transcription and an equalization of X-linked gene expression between the sexes. The chain is Zinc finger protein sdc-3 (sdc-3) from Caenorhabditis elegans.